Consider the following 462-residue polypeptide: ATP synthase subunit beta (462 aa).

Position 151–158 (151–158 (GGAGVGKT)) interacts with ATP.

This sequence belongs to the ATPase alpha/beta chains family. As to quaternary structure, F-type ATPases have 2 components, CF(1) - the catalytic core - and CF(0) - the membrane proton channel. CF(1) has five subunits: alpha(3), beta(3), gamma(1), delta(1), epsilon(1). CF(0) has four main subunits: a(1), b(1), b'(1) and c(9-12).

Its subcellular location is the cell inner membrane. It catalyses the reaction ATP + H2O + 4 H(+)(in) = ADP + phosphate + 5 H(+)(out). In terms of biological role, produces ATP from ADP in the presence of a proton gradient across the membrane. The catalytic sites are hosted primarily by the beta subunits. The sequence is that of ATP synthase subunit beta from Chlorobium phaeobacteroides (strain BS1).